The sequence spans 317 residues: Beta-ketoacyl-[acyl-carrier-protein] synthase III (317 aa).

Catalysis depends on residues Cys112 and His244. An ACP-binding region spans residues 245-249 (QANLR). The active site involves Asn274.

The protein belongs to the thiolase-like superfamily. FabH family. As to quaternary structure, homodimer.

It localises to the cytoplasm. It catalyses the reaction malonyl-[ACP] + acetyl-CoA + H(+) = 3-oxobutanoyl-[ACP] + CO2 + CoA. Its pathway is lipid metabolism; fatty acid biosynthesis. Its function is as follows. Catalyzes the condensation reaction of fatty acid synthesis by the addition to an acyl acceptor of two carbons from malonyl-ACP. Catalyzes the first condensation reaction which initiates fatty acid synthesis and may therefore play a role in governing the total rate of fatty acid production. Possesses both acetoacetyl-ACP synthase and acetyl transacylase activities. Its substrate specificity determines the biosynthesis of branched-chain and/or straight-chain of fatty acids. This Escherichia coli O9:H4 (strain HS) protein is Beta-ketoacyl-[acyl-carrier-protein] synthase III.